Reading from the N-terminus, the 611-residue chain is O-fucosyltransferase 8 (611 aa).

The interval 1 to 29 (MGKQGSPRSPRPETIDKEEKFGRRSLDSL) is disordered. A compositionally biased stretch (basic and acidic residues) spans 10–26 (PRPETIDKEEKFGRRSL). The helical; Signal-anchor for type II membrane protein transmembrane segment at 78–98 (IVLMISVTGFIFCMDSIMVSI) threads the bilayer. Asn115, Asn216, and Asn270 each carry an N-linked (GlcNAc...) asparagine glycan. 386-388 (HLR) contributes to the substrate binding site. Asn506 carries an N-linked (GlcNAc...) asparagine glycan.

The protein belongs to the glycosyltransferase GT106 family.

The protein localises to the membrane. Its pathway is glycan metabolism. This chain is O-fucosyltransferase 8, found in Arabidopsis thaliana (Mouse-ear cress).